The primary structure comprises 503 residues: Long-chain-aldehyde dehydrogenase (503 aa).

218–224 (GYGAEVG) serves as a coordination point for NAD(+). Catalysis depends on residues E262 and C301.

Belongs to the aldehyde dehydrogenase family. As to quaternary structure, homotetramer.

The enzyme catalyses a long-chain fatty aldehyde + NAD(+) + H2O = a long-chain fatty acid + NADH + 2 H(+). Its activity is regulated as follows. Completely inhibited by p-chloromercuribenzoate and N-ethylmaleimide. Strongly inhibited by iodoacetate. Inhibited by Pb(2+), Fe(3+), Ag(+) and Hg(2+) and partially inhibited by several other metal ions Mn(2+), Zn(2+) and Cu(2+). Aldehyde dehydrogenase that shows activity toward n-alkanals (C(4) to C(14)), with a preference for longer carbon chains. The best substrate is tetradecanal. This Acinetobacter sp protein is Long-chain-aldehyde dehydrogenase (ald1).